The sequence spans 360 residues: Phospho-N-acetylmuramoyl-pentapeptide-transferase (360 aa).

10 helical membrane-spanning segments follow: residues 21–41, 73–93, 97–117, 134–154, 168–188, 199–219, 239–259, 263–283, 288–308, and 338–358; these read YLTL…ILIG, TMGG…WADL, YVLV…VDDY, YFWQ…SATM, VFPQ…VGTS, GLAI…AYVT, LVIV…FNTY, VFMG…LAVL, LVLI…ILQV, and VIVR…ATLK.

It belongs to the glycosyltransferase 4 family. MraY subfamily. Mg(2+) serves as cofactor.

It localises to the cell inner membrane. It carries out the reaction UDP-N-acetyl-alpha-D-muramoyl-L-alanyl-gamma-D-glutamyl-meso-2,6-diaminopimeloyl-D-alanyl-D-alanine + di-trans,octa-cis-undecaprenyl phosphate = di-trans,octa-cis-undecaprenyl diphospho-N-acetyl-alpha-D-muramoyl-L-alanyl-D-glutamyl-meso-2,6-diaminopimeloyl-D-alanyl-D-alanine + UMP. It participates in cell wall biogenesis; peptidoglycan biosynthesis. Its function is as follows. Catalyzes the initial step of the lipid cycle reactions in the biosynthesis of the cell wall peptidoglycan: transfers peptidoglycan precursor phospho-MurNAc-pentapeptide from UDP-MurNAc-pentapeptide onto the lipid carrier undecaprenyl phosphate, yielding undecaprenyl-pyrophosphoryl-MurNAc-pentapeptide, known as lipid I. The chain is Phospho-N-acetylmuramoyl-pentapeptide-transferase from Alteromonas mediterranea (strain DSM 17117 / CIP 110805 / LMG 28347 / Deep ecotype).